The following is a 103-amino-acid chain: Large ribosomal subunit protein bL21 (103 aa).

The protein belongs to the bacterial ribosomal protein bL21 family. As to quaternary structure, part of the 50S ribosomal subunit. Contacts protein L20.

This protein binds to 23S rRNA in the presence of protein L20. This Shewanella pealeana (strain ATCC 700345 / ANG-SQ1) protein is Large ribosomal subunit protein bL21.